A 416-amino-acid polypeptide reads, in one-letter code: MALTSSAESPVPVREVARQIGLWVGRLGRIWVDGQLTQIKIRPGTNTVFFNLRDPSANVTLLATCPRQVFECIEPKPTEGLRVAVLGKPEFYVPRGSLQLVVHDIRPIGIGDLLARLERLKKILAAEGLFAPERKRPLPFLPRVVGLICGRGSAAERDVVENARRRWPAVRFDIAAVAVQGPYAVPEIVAALRRLDDDPVVDVIVIARGGGSVEDLLPFSDETLLRAVAACRTPVVSAIGHETDTPLLDFVADVAASTPTDAARRIVPDVAEQYAQLAQLGDRLRNALRHRIDREQQVLDTLRSRPVLAHPVQDINRRGEEILRLVRAGRTALDTAIRAADADARHLVARLRALAPAATLERGYAIVLDPAGRVIRGADEVQTGDELVVRLGRGRLRVTVTDVAPAETDHPLGSLA.

It belongs to the XseA family. In terms of assembly, heterooligomer composed of large and small subunits.

Its subcellular location is the cytoplasm. The catalysed reaction is Exonucleolytic cleavage in either 5'- to 3'- or 3'- to 5'-direction to yield nucleoside 5'-phosphates.. In terms of biological role, bidirectionally degrades single-stranded DNA into large acid-insoluble oligonucleotides, which are then degraded further into small acid-soluble oligonucleotides. This Acidothermus cellulolyticus (strain ATCC 43068 / DSM 8971 / 11B) protein is Exodeoxyribonuclease 7 large subunit.